Reading from the N-terminus, the 117-residue chain is Appetite-regulating hormone (117 aa).

A signal peptide spans 1–23; that stretch reads MPSPGTVCSLLLFSMLWADLAMA. S26 carries the O-decanoyl serine; alternate lipid modification. A lipid anchor (O-hexanoyl serine; alternate) is attached at S26. The O-octanoyl serine; alternate moiety is linked to residue S26. The segment at 29–52 is disordered; that stretch reads SPEHQKVQQRKESKKPPAKLQPRA. Basic and acidic residues predominate over residues 31–43; sequence EHQKVQQRKESKK. Residues 52-75 constitute a propeptide, removed in mature form; the sequence is ALEGLIHPEDTSQVEGAEDELEIR. L98 carries the post-translational modification Leucine amide. The propeptide at 99–117 is removed in mature form; sequence GKFLQDVLWEEADEVLADE.

Belongs to the motilin family. Post-translationally, O-octanoylated by GOAT/MBOAT4. O-octanoylation or O-decanoylation is essential for ghrelin activity. The O-decanoylated forms Ghrelin-27-C10 and Ghrelin-28-C10 differ in the length of the carbon backbone of the carboxylic acid bound to Ser-26. A small fraction of ghrelin, ghrelin-27-C10:1, ghrelin-27-C10:2, ghrelin-28-C8:1, ghrelin-28-C10:1, and ghrelin-28-C10:2, may be modified with singly or doubly unsaturated carboxylic acids. In terms of processing, amidation of Leu-98 is essential for obestatin activity.

The protein resides in the secreted. Functionally, ghrelin is the ligand for growth hormone secretagogue receptor type 1 (GHSR). Induces the release of growth hormone from the pituitary. Has an appetite-stimulating effect, induces adiposity and stimulates gastric acid secretion. Involved in growth regulation. Its function is as follows. Obestatin may be the ligand for GPR39. May have an appetite-reducing effect resulting in decreased food intake. May reduce gastric emptying activity and jejunal motility. The chain is Appetite-regulating hormone (GHRL) from Felis catus (Cat).